A 411-amino-acid polypeptide reads, in one-letter code: Dipeptidase 1 (411 aa).

An N-terminal signal peptide occupies residues 1–16 (MWSGWWLWPLVAVCTA). Zn(2+) contacts are provided by H36 and D38. N57 is a glycosylation site (N-linked (GlcNAc...) asparagine). C87 and C170 are oxidised to a cystine. E141 lines the Zn(2+) pocket. Residue H168 participates in substrate binding. Residues H214 and H235 each coordinate Zn(2+). An intrachain disulfide couples C242 to C274. R246 contributes to the substrate binding site. N279 carries N-linked (GlcNAc...) asparagine glycosylation. D304 is a substrate binding site. 2 N-linked (GlcNAc...) asparagine glycosylation sites follow: N332 and N358. A lipid anchor (GPI-anchor amidated serine) is attached at S385. Residues 386–411 (GASSLHRHWGLLLASLAPLVLCLSLL) constitute a propeptide, removed in mature form.

This sequence belongs to the metallo-dependent hydrolases superfamily. Peptidase M19 family. As to quaternary structure, homodimer; disulfide-linked. It depends on Zn(2+) as a cofactor. Expressed in lung and kidneys.

It localises to the apical cell membrane. It is found in the cell projection. The protein localises to the microvillus membrane. The enzyme catalyses an L-aminoacyl-L-amino acid + H2O = 2 an L-alpha-amino acid. It catalyses the reaction leukotriene D4 + H2O = leukotriene E4 + glycine. It carries out the reaction a beta-lactam + H2O = a substituted beta-amino acid. The catalysed reaction is L-cystine-bis-glycine + 2 H2O = L-cystine + 2 glycine. The enzyme catalyses glycyldehydrophenylalanine + H2O = 2,3-didehydrophenylalanine + glycine. With respect to regulation, inhibited by L-penicillamine. Beta-lactamase activity is inhibited by cilastatin. Functionally, hydrolyzes a wide range of dipeptides including the conversion of leukotriene D4 to leukotriene E4. Hydrolyzes cystinyl-bis-glycine (cys-bis-gly) formed during glutathione degradation. Also possesses beta lactamase activity and can hydrolyze the beta-lactam antibiotic imipenem. Independently of its dipeptidase activity, acts as an adhesion receptor for neutrophil recruitment from bloodstream into inflamed lungs and liver. The polypeptide is Dipeptidase 1 (DPEP1) (Homo sapiens (Human)).